The primary structure comprises 605 residues: Heparan-sulfate 6-O-sulfotransferase 2 (605 aa).

The Cytoplasmic segment spans residues 1–4 (MALP). The segment at 1-66 (MALPACAVRE…GVSHGFHTRP (66 aa)) is disordered. A helical; Signal-anchor for type II membrane protein transmembrane segment spans residues 5 to 27 (ACAVREFEPPRQPERGAPVRTTC). Residues 9–18 (REFEPPRQPE) show a composition bias toward basic and acidic residues. The Lumenal portion of the chain corresponds to 28 to 605 (PRRHSRVEAE…DYIGSVEKWR (578 aa)). A glycan (N-linked (GlcNAc...) asparagine) is linked at N209. A 3'-phosphoadenylyl sulfate-binding site is contributed by 233-241 (HIQKTGGTT). Residues 263–264 (KK), R280, W285, and H290 each bind substrate. H290 acts as the Proton acceptor in catalysis. The 3'-phosphoadenylyl sulfate site is built by R325 and S333. Substrate contacts are provided by H337 and W344. N404 carries an N-linked (GlcNAc...) asparagine glycan. 457–459 (TQY) contributes to the 3'-phosphoadenylyl sulfate binding site. N460 is a glycosylation site (N-linked (GlcNAc...) asparagine). 463–464 (RA) provides a ligand contact to 3'-phosphoadenylyl sulfate. The interval 530-605 (FQSQGQGQSQ…DYIGSVEKWR (76 aa)) is disordered. Positions 531–571 (QSQGQGQSQNPNQNQSQNPNPNANQNLTQNLMQNLTQSLSQ) are enriched in low complexity. N544, N556, N564, N589, and N592 each carry an N-linked (GlcNAc...) asparagine glycan. A compositionally biased stretch (polar residues) spans 579–597 (KQNSGKEQNDNTSNGTNDY).

The protein belongs to the sulfotransferase 6 family.

The protein resides in the membrane. It carries out the reaction alpha-D-glucosaminyl-[heparan sulfate](n) + 3'-phosphoadenylyl sulfate = 6-sulfo-alpha-D-glucosaminyl-[heparan sulfate](n) + adenosine 3',5'-bisphosphate + H(+). Its function is as follows. 6-O-sulfation enzyme which catalyzes the transfer of sulfate from 3'-phosphoadenosine 5'-phosphosulfate (PAPS) to position 6 of the N-sulfoglucosamine residue (GlcNS) of heparan sulfate. The protein is Heparan-sulfate 6-O-sulfotransferase 2 of Homo sapiens (Human).